A 506-amino-acid polypeptide reads, in one-letter code: Maturase K (506 aa).

The protein belongs to the intron maturase 2 family. MatK subfamily.

The protein localises to the plastid. It localises to the chloroplast. Its function is as follows. Usually encoded in the trnK tRNA gene intron. Probably assists in splicing its own and other chloroplast group II introns. This chain is Maturase K, found in Phyllodoce caerulea (Blue mountain heath).